The following is a 359-amino-acid chain: Ribosomal RNA large subunit methyltransferase M (359 aa).

Residues S186, 219-222 (CPGG), D238, D258, and D275 each bind S-adenosyl-L-methionine. Residue K304 is the Proton acceptor of the active site.

Belongs to the class I-like SAM-binding methyltransferase superfamily. RNA methyltransferase RlmE family. RlmM subfamily. As to quaternary structure, monomer.

It is found in the cytoplasm. The catalysed reaction is cytidine(2498) in 23S rRNA + S-adenosyl-L-methionine = 2'-O-methylcytidine(2498) in 23S rRNA + S-adenosyl-L-homocysteine + H(+). Functionally, catalyzes the 2'-O-methylation at nucleotide C2498 in 23S rRNA. The protein is Ribosomal RNA large subunit methyltransferase M of Aliivibrio fischeri (strain MJ11) (Vibrio fischeri).